Consider the following 392-residue polypeptide: Erythronate-4-phosphate dehydrogenase (392 aa).

Substrate contacts are provided by Ser48 and Thr69. Asp149 serves as a coordination point for NAD(+). Arg215 is an active-site residue. Asp239 contributes to the NAD(+) binding site. Glu244 is an active-site residue. His261 serves as the catalytic Proton donor. Residue Gly264 coordinates NAD(+). A substrate-binding site is contributed by Tyr265.

The protein belongs to the D-isomer specific 2-hydroxyacid dehydrogenase family. PdxB subfamily. As to quaternary structure, homodimer.

The protein resides in the cytoplasm. It carries out the reaction 4-phospho-D-erythronate + NAD(+) = (R)-3-hydroxy-2-oxo-4-phosphooxybutanoate + NADH + H(+). Its pathway is cofactor biosynthesis; pyridoxine 5'-phosphate biosynthesis; pyridoxine 5'-phosphate from D-erythrose 4-phosphate: step 2/5. Functionally, catalyzes the oxidation of erythronate-4-phosphate to 3-hydroxy-2-oxo-4-phosphonooxybutanoate. This Salinibacter ruber (strain DSM 13855 / M31) protein is Erythronate-4-phosphate dehydrogenase.